The following is a 152-amino-acid chain: Protein Smg homolog (152 aa).

The protein belongs to the Smg family.

This is Protein Smg homolog from Nitrosomonas europaea (strain ATCC 19718 / CIP 103999 / KCTC 2705 / NBRC 14298).